The chain runs to 167 residues: U-scoloptoxin-Er5c (167 aa).

An N-terminal signal peptide occupies residues 1 to 22; that stretch reads MKTNCEFPLLCLLIVLVANVEG. Positions 23–94 are excised as a propeptide; that stretch reads EVEDTGLKMV…KRLWRNWERR (72 aa). RLWRNWE repeat units follow at residues 34 to 40, 61 to 67, and 86 to 92; these read RLWRNWE. Gln-95 is modified (pyrrolidone carboxylic acid). One copy of the RLWRNWE 4; approximate repeat lies at 107 to 113; it reads ELWRNWE. The propeptide occupies 112–118; it reads WEDLKRR. Gln-119 carries the pyrrolidone carboxylic acid modification. The RLWRNWE 5 repeat unit spans residues 134–140; it reads RLWRNWE. The propeptide occupies 139–167; it reads WEDNHATLRKRSADSLSRQKRLGRERGKE. The disordered stretch occupies residues 147-167; sequence RKRSADSLSRQKRLGRERGKE.

The protein belongs to the scoloptoxin-08 family. Expressed by the venom gland.

It localises to the secreted. The polypeptide is U-scoloptoxin-Er5c (Ethmostigmus rubripes (Giant centipede)).